A 105-amino-acid polypeptide reads, in one-letter code: Protein U4 (105 aa).

Residues 5-25 traverse the membrane as a helical segment; that stretch reads FLLFLLLLVLVINPSLVVNMV.

This sequence belongs to the nanovirus U4 protein family.

The protein resides in the membrane. The chain is Protein U4 (DNA-U4) from Faba bean necrotic yellows virus (isolate Egyptian EV1-93) (FBNYV).